The primary structure comprises 77 residues: MATKFKIKKGDQVMVIAGDDKGKTGEVLQVLPKKEAVIVAGCKMAKKAIKPSEQNKEGGFANAEMPIHISNVKKVEA.

This sequence belongs to the universal ribosomal protein uL24 family. Part of the 50S ribosomal subunit.

One of two assembly initiator proteins, it binds directly to the 5'-end of the 23S rRNA, where it nucleates assembly of the 50S subunit. Functionally, one of the proteins that surrounds the polypeptide exit tunnel on the outside of the subunit. The polypeptide is Large ribosomal subunit protein uL24 (Sulfurovum sp. (strain NBC37-1)).